The primary structure comprises 387 residues: tRNA pseudouridine synthase B (387 aa).

The Nucleophile role is filled by Asp-43.

Belongs to the pseudouridine synthase TruB family. Type 1 subfamily.

It carries out the reaction uridine(55) in tRNA = pseudouridine(55) in tRNA. Responsible for synthesis of pseudouridine from uracil-55 in the psi GC loop of transfer RNAs. This chain is tRNA pseudouridine synthase B, found in Bifidobacterium longum (strain NCC 2705).